Reading from the N-terminus, the 263-residue chain is Complement control protein C3 (263 aa).

The signal sequence occupies residues 1-19 (MKVESVTFLTLLGIGCVLS). Sushi domains are found at residues 20-83 (CCTI…QCIK), 84-145 (RRCP…ICES), 146-203 (VKCQ…TCQI), and 204-263 (VKCP…KCVR). 8 disulfide bridges follow: Cys-21-Cys-70, Cys-54-Cys-81, Cys-86-Cys-126, Cys-112-Cys-143, Cys-148-Cys-190, Cys-176-Cys-201, Cys-206-Cys-248, and Cys-234-Cys-261.

This sequence belongs to the receptors of complement activation (RCA) family. As to quaternary structure, heterodimer with A56 protein; disulfide-linked.

The protein localises to the virion membrane. It is found in the host cell membrane. The protein resides in the secreted. In terms of biological role, serves to protect the virus against complement attack by inhibiting both classical and alternative pathways of complement activation. Binds C3b and C4b. The chain is Complement control protein C3 from Vaccinia virus (strain Copenhagen) (VACV).